The chain runs to 160 residues: Protein Vago (160 aa).

The first 23 residues, 1–23, serve as a signal peptide directing secretion; that stretch reads MESISSMIYLVAMMSLIIGGSQA.

Expressed in fat body.

It is found in the secreted. In terms of biological role, probably involved in the antiviral immune response. May have a role in controlling viral load in the adult fat body, after infection with viruses such as the Drosophila C virus. This Drosophila melanogaster (Fruit fly) protein is Protein Vago.